A 969-amino-acid polypeptide reads, in one-letter code: Protein translocase subunit SecA (969 aa).

ATP-binding positions include Q99, 117 to 121, and D631; that span reads GEGKT.

Belongs to the SecA family. As to quaternary structure, monomer and homodimer. Part of the essential Sec protein translocation apparatus which comprises SecA, SecYEG and auxiliary proteins SecDF. Other proteins may also be involved.

Its subcellular location is the cell inner membrane. It localises to the cytoplasm. The enzyme catalyses ATP + H2O + cellular proteinSide 1 = ADP + phosphate + cellular proteinSide 2.. Its function is as follows. Part of the Sec protein translocase complex. Interacts with the SecYEG preprotein conducting channel. Has a central role in coupling the hydrolysis of ATP to the transfer of proteins into and across the cell membrane, serving as an ATP-driven molecular motor driving the stepwise translocation of polypeptide chains across the membrane. This is Protein translocase subunit SecA from Chlamydia trachomatis serovar L2 (strain ATCC VR-902B / DSM 19102 / 434/Bu).